Reading from the N-terminus, the 603-residue chain is Sulfoacetaldehyde acetyltransferase (603 aa).

The protein belongs to the TPP enzyme family. It depends on Mg(2+) as a cofactor. The cofactor is thiamine diphosphate.

The enzyme catalyses acetyl phosphate + sulfite + H(+) = sulfoacetaldehyde + phosphate. Its function is as follows. Catalyzes the degradation of sulfoacetaldehyde into sulfite and acetyl phosphate. Involved in sulfolactate degradation. The protein is Sulfoacetaldehyde acetyltransferase of Roseovarius nubinhibens (strain ATCC BAA-591 / DSM 15170 / ISM).